Here is a 347-residue protein sequence, read N- to C-terminus: NHL repeat-containing protein 3 (347 aa).

An N-terminal signal peptide occupies residues 1–22 (MARAWVCLAGAAFFLSCLVLHS). Residues 47 to 93 (RLDLGWPKNSEYFTGATFCVAVDSLNGLVYVAQRGDNIPKVLVFSED) form an NHL 1 repeat. The N-linked (GlcNAc...) asparagine glycan is linked to Asn101. NHL repeat units lie at residues 150-196 (TPGK…LSQD) and 200-243 (LWLR…FDKD). N-linked (GlcNAc...) asparagine glycosylation is found at Asn206 and Asn278. An NHL 4 repeat occupies 294-338 (GDCSVVSTIQLADQVLPHLLEVDRKTGAVYVAEIGAKQIQKYIPW).

This is NHL repeat-containing protein 3 (Nhlrc3) from Mus musculus (Mouse).